Reading from the N-terminus, the 407-residue chain is Peptidase T (407 aa).

H82 serves as a coordination point for Zn(2+). The active site involves D84. Zn(2+) is bound at residue D143. E177 (proton acceptor) is an active-site residue. The Zn(2+) site is built by E178, D200, and H382.

The protein belongs to the peptidase M20B family. It depends on Zn(2+) as a cofactor.

It is found in the cytoplasm. The enzyme catalyses Release of the N-terminal residue from a tripeptide.. In terms of biological role, cleaves the N-terminal amino acid of tripeptides. In Streptococcus equi subsp. equi (strain 4047), this protein is Peptidase T.